The sequence spans 653 residues: Fructose-1,6-bisphosphatase class 3 (653 aa).

This sequence belongs to the FBPase class 3 family. Mn(2+) serves as cofactor.

The enzyme catalyses beta-D-fructose 1,6-bisphosphate + H2O = beta-D-fructose 6-phosphate + phosphate. Its pathway is carbohydrate biosynthesis; gluconeogenesis. The chain is Fructose-1,6-bisphosphatase class 3 from Listeria monocytogenes serotype 4b (strain CLIP80459).